The chain runs to 340 residues: MLVTEETLLGKSLDELTQWVEKQGQPTYRGKQLHQWLYEKGARSLDEISVFPKTWREKLINYPIGRSTIDYRTVAPDATRKYLLCLGDGLIIETVGIPTAKRLTVCVSSQVGCPMACDFCATGKGGYQRHLRAHEIVDQVLTVQEDFQRRVSHVVFMGMGEPLLNLEEVVKSVKILNQDIGIGQRSLTISTVGLPQKIIQLAHHHLQVTLAVSLHASNQPLRETLIPSAQHYTLKNLLADCREYVNITGRRISFEYVLLGGVNDLPEQAIELANLLKGFQSHVNLIPYNPIDEADYQRPNQTQIQTFVQVLEQHKIAVSVRYSRGLEANAACGQLRASQR.

The active-site Proton acceptor is Glu-93. Positions 99 to 327 (TAKRLTVCVS…VSVRYSRGLE (229 aa)) constitute a Radical SAM core domain. Cys-106 and Cys-332 are oxidised to a cystine. [4Fe-4S] cluster contacts are provided by Cys-113, Cys-117, and Cys-120. S-adenosyl-L-methionine-binding positions include 160-161 (GE), Ser-190, 213-215 (SLH), and Asn-289. Cys-332 acts as the S-methylcysteine intermediate in catalysis.

It belongs to the radical SAM superfamily. RlmN family. Requires [4Fe-4S] cluster as cofactor.

Its subcellular location is the cytoplasm. It carries out the reaction adenosine(2503) in 23S rRNA + 2 reduced [2Fe-2S]-[ferredoxin] + 2 S-adenosyl-L-methionine = 2-methyladenosine(2503) in 23S rRNA + 5'-deoxyadenosine + L-methionine + 2 oxidized [2Fe-2S]-[ferredoxin] + S-adenosyl-L-homocysteine. It catalyses the reaction adenosine(37) in tRNA + 2 reduced [2Fe-2S]-[ferredoxin] + 2 S-adenosyl-L-methionine = 2-methyladenosine(37) in tRNA + 5'-deoxyadenosine + L-methionine + 2 oxidized [2Fe-2S]-[ferredoxin] + S-adenosyl-L-homocysteine. Specifically methylates position 2 of adenine 2503 in 23S rRNA and position 2 of adenine 37 in tRNAs. This Rippkaea orientalis (strain PCC 8801 / RF-1) (Cyanothece sp. (strain PCC 8801)) protein is Probable dual-specificity RNA methyltransferase RlmN.